A 475-amino-acid chain; its full sequence is Ankyrin repeat, SAM and basic leucine zipper domain-containing protein 1 (475 aa).

The interval 1–22 (MAAGALRGLPVAGGGESSESED) is disordered. Residues Ser17, Ser18, and Ser20 each carry the phosphoserine modification. 6 ANK repeats span residues 45–74 (EKKEKFKKAMTIGDVSLIQELLDSGISVDS), 78–107 (YGWTPLMYAASVANAELVRVLLDSGANASF), 110–144 (DKQTILITACSARGSEEQILKCVELLLSRNADPNV), 148–177 (RLMTPIMYAARDGHTQVVALLVAHGAEVNT), 181–210 (NGYTALTWAARQGHKNIVLKLLELGANKML), and 214–243 (DGKMPSEIAKRNKHHEIFNLLSFTLNPLEG). One can recognise an SAM domain in the interval 272–334 (SYTAFGDLEV…KILATLKELQ (63 aa)).

As to quaternary structure, interacts with DDX4, PIWIL1, RANBP9 and TDRD1.

The protein localises to the cytoplasm. Functionally, plays a central role during spermatogenesis by repressing transposable elements and preventing their mobilization, which is essential for the germline integrity. Acts via the piRNA metabolic process, which mediates the repression of transposable elements during meiosis by forming complexes composed of piRNAs and Piwi proteins and governs the methylation and subsequent repression of transposons. Its association with pi-bodies suggests a participation in the primary piRNAs metabolic process. Required prior to the pachytene stage to facilitate the production of multiple types of piRNAs, including those associated with repeats involved in the regulation of retrotransposons. May act by mediating protein-protein interactions during germ cell maturation. This Colobus guereza (Mantled guereza) protein is Ankyrin repeat, SAM and basic leucine zipper domain-containing protein 1 (ASZ1).